The primary structure comprises 119 residues: Probable non-functional T cell receptor gamma variable 11 (119 aa).

An N-terminal signal peptide occupies residues 1–18 (MPLVVAVIFFSLWVFALG). The region spanning 23–119 (PEISISRPAN…VYHCACWIRH (97 aa)) is the Ig-like domain. Asn-32 carries N-linked (GlcNAc...) asparagine glycosylation.

In terms of assembly, most probably, the gamma-delta TR is not assembled due to incorrect folding of the gamma chain. Gamma-delta TR is a heterodimer composed of a gamma and delta chain; disulfide-linked. The gamma-delta TR is associated with the transmembrane signaling CD3 coreceptor proteins following the stoichiometry: a single gamma-delta TR heterodimer associates with one CD3D-CD3E heterodimer, one CD3G-CD3E heterodimer and one CD247 homodimer forming a stable octameric structure. Upon activation, gamma-delta TR complex associates with FCER1G to initiate intracellular signaling.

The protein localises to the cell membrane. Probable non-functional open reading frame (ORF) of V region of the variable domain of T cell receptor (TR) gamma chain. Non-functional ORF generally cannot participate in the synthesis of a productive T cell receptor (TR) chain due to altered V-(D)-J or switch recombination and/or splicing site (at mRNA level) and/or conserved amino acid change (protein level). Gamma-delta TRs recognize a variety of self and foreign non-peptide antigens frequently expressed at the epithelial boundaries between the host and external environment, including endogenous lipids presented by MH-like protein CD1D and phosphoantigens presented by butyrophilin-like molecule BTN3A1. Upon antigen recognition induces rapid, innate-like immune responses involved in pathogen clearance and tissue repair. Binding of gamma-delta TR complex to antigen triggers phosphorylation of immunoreceptor tyrosine-based activation motifs (ITAMs) in the CD3 chains by the LCK and FYN kinases, allowing the recruitment, phosphorylation, and activation of ZAP70 that facilitates phosphorylation of the scaffolding proteins LCP2 and LAT. This lead to the formation of a supramolecular signalosome that recruits the phospholipase PLCG1, resulting in calcium mobilization and ERK activation, ultimately leading to T cell expansion and differentiation into effector cells. Gamma-delta TRs are produced through somatic rearrangement of a limited repertoire of variable (V), diversity (D), and joining (J) genes. The potential diversity of gamma-delta TRs is conferred by the unique ability to rearrange (D) genes in tandem and to utilize all three reading frames. The combinatorial diversity is considerably increased by the sequence exonuclease trimming and random nucleotide (N) region additions which occur during the V-(D)-J rearrangements. The polypeptide is Probable non-functional T cell receptor gamma variable 11 (Homo sapiens (Human)).